Consider the following 260-residue polypeptide: Large ribosomal subunit protein eL8A (260 aa).

The interval methionine 1–phenylalanine 34 is disordered.

It belongs to the eukaryotic ribosomal protein eL8 family. In terms of assembly, component of the large ribosomal subunit. Mature ribosomes consist of a small (40S) and a large (60S) subunit. The 40S subunit contains about 32 different proteins and 1 molecule of RNA (18S). The 60S subunit contains 45 different proteins and 3 molecules of RNA (25S, 5.8S and 5S).

The protein localises to the cytoplasm. In terms of biological role, component of the ribosome, a large ribonucleoprotein complex responsible for the synthesis of proteins in the cell. The small ribosomal subunit (SSU) binds messenger RNAs (mRNAs) and translates the encoded message by selecting cognate aminoacyl-transfer RNA (tRNA) molecules. The large subunit (LSU) contains the ribosomal catalytic site termed the peptidyl transferase center (PTC), which catalyzes the formation of peptide bonds, thereby polymerizing the amino acids delivered by tRNAs into a polypeptide chain. The nascent polypeptides leave the ribosome through a tunnel in the LSU and interact with protein factors that function in enzymatic processing, targeting, and the membrane insertion of nascent chains at the exit of the ribosomal tunnel. The chain is Large ribosomal subunit protein eL8A from Candida albicans (strain SC5314 / ATCC MYA-2876) (Yeast).